A 101-amino-acid polypeptide reads, in one-letter code: opdI (101 aa).

The chain crosses the membrane as a helical span at residues 30–49 (GGMGGALKIVFLGMMTYFIA). Residues 56-101 (SQHPPTDFNAPVQSVPQRAQRPSDTRLQGPVLLASNHPSGDSASPE) are disordered. Polar residues-rich tracts occupy residues 66–81 (PVQS…SDTR) and 91–101 (NHPSGDSASPE).

Its subcellular location is the membrane. Functionally, part of the gene cluster that mediates the biosynthesis of oxopyrrolidines, polyketide-amino acid hybrid compounds with feature structures of tetramic acid. Does not seem to play a role in oxopyrrolidines A and B biosynthesis. The protein is opdI of Penicillium oxalicum (strain 114-2 / CGMCC 5302) (Penicillium decumbens).